A 681-amino-acid chain; its full sequence is Envelope glycoprotein (681 aa).

The first 18 residues, 1–18 (MKTTCLLISLILIQGVKT), serve as a signal peptide directing secretion. At 19–648 (LPILEIASNI…GLGGKWWTSD (630 aa)) the chain is on the extracellular side. Residues 38 to 188 (SGTLQKTEDV…FSRQGQGYRH (151 aa)) form a receptor-binding region. N-linked (GlcNAc...) asparagine; by host glycans are attached at residues Asn94, Asn171, Asn190, Asn202, Asn207, Asn219, Asn223, and Asn255. A disordered region spans residues 222–424 (KNQTCAPSKK…TSPSPTPNST (203 aa)). 3 stretches are compositionally biased toward polar residues: residues 244 to 259 (LTSTSTDATKLNTTDP), 278 to 290 (PYTTSDAATKQGL), and 308 to 331 (GGNNTNHSQGVVTEPGKTNTTAQP). A mucin-like region region spans residues 277–455 (EPYTTSDAAT…PFLDGLINAP (179 aa)). 12 N-linked (GlcNAc...) asparagine; by host glycosylation sites follow: Asn310, Asn313, Asn326, Asn337, Asn344, Asn345, Asn350, Asn360, Asn397, Asn408, Asn422, and Asn487. Over residues 337 to 347 (NTTTISTNNTS) the composition is skewed to low complexity. Over residues 348–388 (KHNLSTPSVPIQNATNYNTQSTAPENEQTSAPSKTTLLPTE) the composition is skewed to polar residues. Residues 389 to 424 (NPTTAKSTNSTKSPTTTVPNTTNKYSTSPSPTPNST) show a composition bias toward low complexity. The segment at 529–549 (GLSWIPFFGPGIEGLYTAGLI) is fusion peptide. 2 N-linked (GlcNAc...) asparagine; by host glycosylation sites follow: Asn564 and Asn619. A helical transmembrane segment spans residues 649–669 (WGVLTNLGILLLLSIAVLIAL). Topologically, residues 670–681 (SCICRIFTKYIG) are cytoplasmic. 2 S-palmitoyl cysteine; by host lipidation sites follow: Cys671 and Cys673.

Belongs to the filoviruses glycoprotein family. As to quaternary structure, homotrimer; each monomer consists of a GP1 and a GP2 subunit linked by disulfide bonds. The resulting peplomers (GP1,2) protrude from the virus surface as spikes. GP1,2 interacts with human CD209 and CLEC4M (collectively referred to as DC-SIGN(R)). Asialoglycoprotein receptor (ASGP-R) may be a liver-specific receptor for GP1,2. Members of the Tyro3 receptor tyrosine kinase family may be cell entry factors interacting with GP1,2. Post-translationally, N-glycosylated. In terms of processing, O-glycosylated in the mucin-like region. Specific enzymatic cleavages in vivo yield mature proteins. The precursor is processed into GP1 and GP2 by host cell furin in the trans Golgi, and maybe by other host proteases, to yield the mature GP1 and GP2 proteins. The cleavage site corresponds to the furin optimal cleavage sequence [KR]-X-[KR]-R. Post-translationally, GP1 is phosphorylated on serine residues between residues 260 and 273.

Its subcellular location is the virion membrane. The protein localises to the host cell membrane. GP1 is responsible for binding to the receptor(s) on target cells. Interacts with CD209/DC-SIGN and CLEC4M/DC-SIGNR which act as cofactors for virus entry into the host cell. Binding to CD209 and CLEC4M, which are respectively found on dendritic cells (DCs), and on endothelial cells of liver sinusoids and lymph node sinuses, facilitate infection of macrophages and endothelial cells. These interactions not only facilitate virus cell entry, but also allow capture of viral particles by DCs and subsequent transmission to susceptible cells without DCs infection (trans infection). In terms of biological role, GP2 acts as a class I viral fusion protein. Under the current model, the protein has at least 3 conformational states: pre-fusion native state, pre-hairpin intermediate state, and post-fusion hairpin state. During viral and target cell membrane fusion, the coiled coil regions (heptad repeats) assume a trimer-of-hairpins structure, positioning the fusion peptide in close proximity to the C-terminal region of the ectodomain. The formation of this structure appears to drive apposition and subsequent fusion of viral and target cell membranes. Responsible for penetration of the virus into the cell cytoplasm by mediating the fusion of the membrane of the endocytosed virus particle with the endosomal membrane. Low pH in endosomes induces an irreversible conformational change in GP2, releasing the fusion hydrophobic peptide. This chain is Envelope glycoprotein (GP), found in Chlorocebus aethiops (Green monkey).